Reading from the N-terminus, the 82-residue chain is Small ribosomal subunit protein uS17 (82 aa).

It belongs to the universal ribosomal protein uS17 family. In terms of assembly, part of the 30S ribosomal subunit.

In terms of biological role, one of the primary rRNA binding proteins, it binds specifically to the 5'-end of 16S ribosomal RNA. This Bradyrhizobium sp. (strain BTAi1 / ATCC BAA-1182) protein is Small ribosomal subunit protein uS17.